The chain runs to 657 residues: Translation factor GUF1, mitochondrial (657 aa).

The transit peptide at 1 to 39 (MRGCLQSVKWLTSALRPSQSLASSTRYPRRLLSTSAPRN) directs the protein to the mitochondrion. Residues 59–239 (ERFRNFCIVA…TVIEQIPAPV (181 aa)) form the tr-type G domain. GTP contacts are provided by residues 68–75 (AHVDHGKS), 132–136 (DTPGH), and 186–189 (NKVD).

Belongs to the TRAFAC class translation factor GTPase superfamily. Classic translation factor GTPase family. LepA subfamily.

It localises to the mitochondrion inner membrane. It catalyses the reaction GTP + H2O = GDP + phosphate + H(+). Promotes mitochondrial protein synthesis. May act as a fidelity factor of the translation reaction, by catalyzing a one-codon backward translocation of tRNAs on improperly translocated ribosomes. Binds to mitochondrial ribosomes in a GTP-dependent manner. The chain is Translation factor GUF1, mitochondrial from Ajellomyces capsulatus (strain G186AR / H82 / ATCC MYA-2454 / RMSCC 2432) (Darling's disease fungus).